Consider the following 179-residue polypeptide: Large ribosomal subunit protein uL5 (179 aa).

Belongs to the universal ribosomal protein uL5 family. Part of the 50S ribosomal subunit; part of the 5S rRNA/L5/L18/L25 subcomplex. Contacts the 5S rRNA and the P site tRNA. Forms a bridge to the 30S subunit in the 70S ribosome.

Functionally, this is one of the proteins that bind and probably mediate the attachment of the 5S RNA into the large ribosomal subunit, where it forms part of the central protuberance. In the 70S ribosome it contacts protein S13 of the 30S subunit (bridge B1b), connecting the 2 subunits; this bridge is implicated in subunit movement. Contacts the P site tRNA; the 5S rRNA and some of its associated proteins might help stabilize positioning of ribosome-bound tRNAs. The chain is Large ribosomal subunit protein uL5 from Ruthia magnifica subsp. Calyptogena magnifica.